The primary structure comprises 245 residues: 1-(5-phosphoribosyl)-5-[(5-phosphoribosylamino)methylideneamino] imidazole-4-carboxamide isomerase (245 aa).

The Proton acceptor role is filled by Asp-8. Asp-131 acts as the Proton donor in catalysis.

Belongs to the HisA/HisF family.

Its subcellular location is the cytoplasm. The enzyme catalyses 1-(5-phospho-beta-D-ribosyl)-5-[(5-phospho-beta-D-ribosylamino)methylideneamino]imidazole-4-carboxamide = 5-[(5-phospho-1-deoxy-D-ribulos-1-ylimino)methylamino]-1-(5-phospho-beta-D-ribosyl)imidazole-4-carboxamide. The protein operates within amino-acid biosynthesis; L-histidine biosynthesis; L-histidine from 5-phospho-alpha-D-ribose 1-diphosphate: step 4/9. This is 1-(5-phosphoribosyl)-5-[(5-phosphoribosylamino)methylideneamino] imidazole-4-carboxamide isomerase from Neisseria gonorrhoeae (strain ATCC 700825 / FA 1090).